A 127-amino-acid polypeptide reads, in one-letter code: Fluoride-specific ion channel FluC (127 aa).

4 helical membrane passes run 1-21, 39-59, 72-92, and 105-125; these read MPQG…GACL, FGTL…YGVI, LIGV…VETL, and ANVF…IELM. Positions 79 and 82 each coordinate Na(+).

The protein belongs to the fluoride channel Fluc/FEX (TC 1.A.43) family.

Its subcellular location is the cell inner membrane. It carries out the reaction fluoride(in) = fluoride(out). Its activity is regulated as follows. Na(+) is not transported, but it plays an essential structural role and its presence is essential for fluoride channel function. Fluoride-specific ion channel. Important for reducing fluoride concentration in the cell, thus reducing its toxicity. The polypeptide is Fluoride-specific ion channel FluC (Alteromonas mediterranea (strain DSM 17117 / CIP 110805 / LMG 28347 / Deep ecotype)).